The sequence spans 149 residues: uncharacterized protein (149 aa).

The protein to Rhizobium NGR234A y4oM.

This is an uncharacterized protein from Sinorhizobium fredii (strain NBRC 101917 / NGR234).